We begin with the raw amino-acid sequence, 527 residues long: Peptide chain release factor 3 (527 aa).

A tr-type G domain is found at 9-277; it reads AKRRTFAIIS…AVVNWAPMPL (269 aa). GTP-binding positions include 18–25, 86–90, and 140–143; these read SHPDAGKT, DTPGH, and NKLD.

The protein belongs to the TRAFAC class translation factor GTPase superfamily. Classic translation factor GTPase family. PrfC subfamily.

It is found in the cytoplasm. In terms of biological role, increases the formation of ribosomal termination complexes and stimulates activities of RF-1 and RF-2. It binds guanine nucleotides and has strong preference for UGA stop codons. It may interact directly with the ribosome. The stimulation of RF-1 and RF-2 is significantly reduced by GTP and GDP, but not by GMP. This Pseudomonas syringae pv. tomato (strain ATCC BAA-871 / DC3000) protein is Peptide chain release factor 3.